A 178-amino-acid chain; its full sequence is MAKGVVFNGLGRVRKFFGKNPEIIDIPDLIEVQKASYDHFLMMNIAPDERPNEGLQAAFKSVFPITAFSGAAMLEFVSYEFDPPKFDVDDCLWRDLTYAVPLKITLRLIVFDVDEFTGAKSIKDIKEQSIYMGDLPLMTKDGTFVIKGTQRIVVSQLHRSPGIHFDHDKGRASLSGKL.

Belongs to the RNA polymerase beta chain family. The RNAP catalytic core consists of 2 alpha, 1 beta, 1 beta' and 1 omega subunit. When a sigma factor is associated with the core the holoenzyme is formed, which can initiate transcription.

It catalyses the reaction RNA(n) + a ribonucleoside 5'-triphosphate = RNA(n+1) + diphosphate. Its function is as follows. DNA-dependent RNA polymerase catalyzes the transcription of DNA into RNA using the four ribonucleoside triphosphates as substrates. This is DNA-directed RNA polymerase subunit beta (rpoB) from Liberibacter asiaticus (Citrus greening disease).